Reading from the N-terminus, the 344-residue chain is Anthranilate phosphoribosyltransferase (344 aa).

Residues Gly81, 84 to 85 (GD), Ser89, 91 to 94 (NIST), 109 to 117 (KHGNRALSS), and Ala121 contribute to the 5-phospho-alpha-D-ribose 1-diphosphate site. Gly81 is a binding site for anthranilate. Ser93 serves as a coordination point for Mg(2+). Asn112 provides a ligand contact to anthranilate. Residue Arg167 participates in anthranilate binding. Mg(2+)-binding residues include Asp226 and Glu227.

The protein belongs to the anthranilate phosphoribosyltransferase family. Homodimer. Mg(2+) serves as cofactor.

The enzyme catalyses N-(5-phospho-beta-D-ribosyl)anthranilate + diphosphate = 5-phospho-alpha-D-ribose 1-diphosphate + anthranilate. Its pathway is amino-acid biosynthesis; L-tryptophan biosynthesis; L-tryptophan from chorismate: step 2/5. Catalyzes the transfer of the phosphoribosyl group of 5-phosphorylribose-1-pyrophosphate (PRPP) to anthranilate to yield N-(5'-phosphoribosyl)-anthranilate (PRA). This is Anthranilate phosphoribosyltransferase from Azorhizobium caulinodans (strain ATCC 43989 / DSM 5975 / JCM 20966 / LMG 6465 / NBRC 14845 / NCIMB 13405 / ORS 571).